Reading from the N-terminus, the 387-residue chain is Lipid-A-disaccharide synthase (387 aa).

The protein belongs to the LpxB family.

It carries out the reaction 2-N,3-O-bis[(3R)-3-hydroxytetradecanoyl]-alpha-D-glucosaminyl 1-phosphate + UDP-2-N,3-O-bis[(3R)-3-hydroxytetradecanoyl]-alpha-D-glucosamine = lipid A disaccharide (E. coli) + UDP + H(+). The enzyme catalyses a lipid X + a UDP-2-N,3-O-bis[(3R)-3-hydroxyacyl]-alpha-D-glucosamine = a lipid A disaccharide + UDP + H(+). It functions in the pathway glycolipid biosynthesis; lipid IV(A) biosynthesis; lipid IV(A) from (3R)-3-hydroxytetradecanoyl-[acyl-carrier-protein] and UDP-N-acetyl-alpha-D-glucosamine: step 5/6. Condensation of UDP-2,3-diacylglucosamine and 2,3-diacylglucosamine-1-phosphate to form lipid A disaccharide, a precursor of lipid A, a phosphorylated glycolipid that anchors the lipopolysaccharide to the outer membrane of the cell. This Blochmanniella pennsylvanica (strain BPEN) protein is Lipid-A-disaccharide synthase.